A 334-amino-acid chain; its full sequence is Leucine carboxyl methyltransferase 1 (334 aa).

S-adenosyl-L-methionine contacts are provided by residues Lys-37, Arg-73, Gly-98, Asp-122, 171–172, and Glu-198; that span reads DL.

This sequence belongs to the methyltransferase superfamily. LCMT family.

It catalyses the reaction [phosphatase 2A protein]-C-terminal L-leucine + S-adenosyl-L-methionine = [phosphatase 2A protein]-C-terminal L-leucine methyl ester + S-adenosyl-L-homocysteine. In terms of biological role, methylates the carboxyl group of the C-terminal leucine residue of protein phosphatase 2A catalytic subunits to form alpha-leucine ester residues. In Homo sapiens (Human), this protein is Leucine carboxyl methyltransferase 1 (LCMT1).